A 343-amino-acid chain; its full sequence is N-acetyl-gamma-glutamyl-phosphate reductase (343 aa).

The active site involves cysteine 152.

It belongs to the NAGSA dehydrogenase family. Type 1 subfamily.

Its subcellular location is the cytoplasm. It catalyses the reaction N-acetyl-L-glutamate 5-semialdehyde + phosphate + NADP(+) = N-acetyl-L-glutamyl 5-phosphate + NADPH + H(+). It functions in the pathway amino-acid biosynthesis; L-arginine biosynthesis; N(2)-acetyl-L-ornithine from L-glutamate: step 3/4. Functionally, catalyzes the NADPH-dependent reduction of N-acetyl-5-glutamyl phosphate to yield N-acetyl-L-glutamate 5-semialdehyde. This chain is N-acetyl-gamma-glutamyl-phosphate reductase, found in Methanopyrus kandleri (strain AV19 / DSM 6324 / JCM 9639 / NBRC 100938).